Consider the following 105-residue polypeptide: Large ribosomal subunit protein eL36 (105 aa).

K62 is modified (N6-acetyllysine).

It belongs to the eukaryotic ribosomal protein eL36 family. Component of the large ribosomal subunit.

It is found in the cytoplasm. It localises to the cytosol. In terms of biological role, component of the large ribosomal subunit. The ribosome is a large ribonucleoprotein complex responsible for the synthesis of proteins in the cell. This is Large ribosomal subunit protein eL36 (RPL36) from Bos taurus (Bovine).